A 526-amino-acid chain; its full sequence is Peptide chain release factor 3 (526 aa).

Residues N8 to Q277 enclose the tr-type G domain. GTP-binding positions include S17 to T24, D85 to H89, and N139 to D142.

Belongs to the TRAFAC class translation factor GTPase superfamily. Classic translation factor GTPase family. PrfC subfamily.

It localises to the cytoplasm. Its function is as follows. Increases the formation of ribosomal termination complexes and stimulates activities of RF-1 and RF-2. It binds guanine nucleotides and has strong preference for UGA stop codons. It may interact directly with the ribosome. The stimulation of RF-1 and RF-2 is significantly reduced by GTP and GDP, but not by GMP. The sequence is that of Peptide chain release factor 3 from Histophilus somni (strain 129Pt) (Haemophilus somnus).